The chain runs to 95 residues: Histone-like DNA-binding protein (95 aa).

This sequence belongs to the bacterial histone-like protein family.

This is Histone-like DNA-binding protein from Rickettsia rickettsii.